The primary structure comprises 124 residues: Trophoblast-specific protein alpha (124 aa).

Positions 1–18 are cleaved as a signal peptide; that stretch reads MTPTIFLVILCLGVASAV. Disordered regions lie at residues 51–74 and 91–124; these read KLHS…SGQL and FEEE…NQPQ. Over residues 62–74 the composition is skewed to polar residues; the sequence is EGSNIEMSASGQL. Acidic residues predominate over residues 103-112; sequence DDPEFEDYTE.

It localises to the secreted. The protein resides in the extracellular space. In terms of biological role, it may be a growth factor/hormone, perhaps involved in interaction between the maternal and fetal systems in maintenance of pregnancy. The chain is Trophoblast-specific protein alpha (Tpbpa) from Mus musculus (Mouse).